The primary structure comprises 285 residues: N-alpha-acetyltransferase 40 (285 aa).

Positions 88 to 274 (INYKLHKSRG…GGGRVVVPCD (187 aa)) constitute an N-acetyltransferase domain. Residues Tyr116, 163–165 (TEE), and Tyr185 contribute to the substrate site. Acetyl-CoA-binding positions include 187 to 189 (VHV) and 195 to 200 (GHGIGR). Thr228 provides a ligand contact to substrate. Residue Asn233 coordinates acetyl-CoA.

This sequence belongs to the acetyltransferase family. NAA40 subfamily.

The protein localises to the nucleus. It is found in the cytoplasm. It carries out the reaction N-terminal L-seryl-[histone H4] + acetyl-CoA = N-terminal N(alpha)-acetyl-L-seryl-[histone H4] + CoA + H(+). The enzyme catalyses N-terminal L-seryl-[histone H2A] + acetyl-CoA = N-terminal N(alpha)-acetyl-L-seryl-[histone H2A] + CoA + H(+). Functionally, N-alpha-acetyltransferase that specifically mediates the acetylation of the N-terminal residues of histones H4 and H2A. The polypeptide is N-alpha-acetyltransferase 40 (Saccharomyces cerevisiae (strain ATCC 204508 / S288c) (Baker's yeast)).